A 398-amino-acid chain; its full sequence is Acetate kinase (398 aa).

Residue N7 coordinates Mg(2+). ATP is bound at residue K14. R85 contributes to the substrate binding site. D142 functions as the Proton donor/acceptor in the catalytic mechanism. ATP contacts are provided by residues 202-206 (HLGNG), 277-279 (DMR), and 325-329 (GIGEN). Mg(2+) is bound at residue E379.

The protein belongs to the acetokinase family. As to quaternary structure, homodimer. Mg(2+) serves as cofactor. Requires Mn(2+) as cofactor.

The protein resides in the cytoplasm. The catalysed reaction is acetate + ATP = acetyl phosphate + ADP. Its pathway is metabolic intermediate biosynthesis; acetyl-CoA biosynthesis; acetyl-CoA from acetate: step 1/2. Catalyzes the formation of acetyl phosphate from acetate and ATP. Can also catalyze the reverse reaction. In Deinococcus radiodurans (strain ATCC 13939 / DSM 20539 / JCM 16871 / CCUG 27074 / LMG 4051 / NBRC 15346 / NCIMB 9279 / VKM B-1422 / R1), this protein is Acetate kinase.